The following is a 367-amino-acid chain: Beta sliding clamp (367 aa).

The protein belongs to the beta sliding clamp family. As to quaternary structure, forms a ring-shaped head-to-tail homodimer around DNA which binds and tethers DNA polymerases and other proteins to the DNA. The DNA replisome complex has a single clamp-loading complex (3 tau and 1 each of delta, delta', psi and chi subunits) which binds 3 Pol III cores (1 core on the leading strand and 2 on the lagging strand) each with a beta sliding clamp dimer. Additional proteins in the replisome are other copies of gamma, psi and chi, Ssb, DNA helicase and RNA primase.

The protein localises to the cytoplasm. Functionally, confers DNA tethering and processivity to DNA polymerases and other proteins. Acts as a clamp, forming a ring around DNA (a reaction catalyzed by the clamp-loading complex) which diffuses in an ATP-independent manner freely and bidirectionally along dsDNA. Initially characterized for its ability to contact the catalytic subunit of DNA polymerase III (Pol III), a complex, multichain enzyme responsible for most of the replicative synthesis in bacteria; Pol III exhibits 3'-5' exonuclease proofreading activity. The beta chain is required for initiation of replication as well as for processivity of DNA replication. The protein is Beta sliding clamp (dnaN) of Pseudomonas aeruginosa (strain ATCC 15692 / DSM 22644 / CIP 104116 / JCM 14847 / LMG 12228 / 1C / PRS 101 / PAO1).